A 385-amino-acid polypeptide reads, in one-letter code: Decapping nuclease RAI1 (385 aa).

E173 contacts a divalent metal cation. Residue E222 participates in substrate binding. D224, E243, and L244 together coordinate a divalent metal cation. K245 and Q269 together coordinate substrate.

Belongs to the DXO/Dom3Z family. As to quaternary structure, interacts with RAT1; the interaction is direct, stabilizes RAT1 protein structure and stimulates its exoribonuclease activity. The interaction also stimulates RAI1 pyrophosphohydrolase activity, probably by recruiting it to mRNA substrates. Requires a divalent metal cation as cofactor.

The protein localises to the nucleus. It carries out the reaction a 5'-end NAD(+)-phospho-ribonucleoside in mRNA + H2O = a 5'-end phospho-ribonucleoside in mRNA + NAD(+) + H(+). It catalyses the reaction a 5'-end (N(7)-methyl 5'-triphosphoguanosine)-ribonucleoside-ribonucleotide in mRNA + H2O = a (N(7)-methyl 5'-triphosphoguanosine)-nucleoside + a 5'-end phospho-ribonucleoside in mRNA + H(+). The enzyme catalyses a 5'-end triphospho-ribonucleoside in mRNA + H2O = a 5'-end phospho-ribonucleoside in mRNA + diphosphate + H(+). Decapping enzyme for NAD-capped RNAs: specifically hydrolyzes the nicotinamide adenine dinucleotide (NAD) cap from a subset of RNAs by removing the entire NAD moiety from the 5'-end of an NAD-capped RNA. The NAD-cap is present at the 5'-end of some RNAs and snoRNAs. In contrast to the canonical 5'-end N7 methylguanosine (m7G) cap, the NAD cap promotes mRNA decay. Also acts as a non-canonical decapping enzyme that removes the entire cap structure of m7G capped or incompletely capped RNAs. Has decapping activity toward incomplete 5'-end m7G cap mRNAs such as unmethylated 5'-end-capped RNA (cap0), while it has no activity toward 2'-O-ribose methylated m7G cap (cap1). Also possesses RNA 5'-pyrophosphohydrolase activity by hydrolyzing the 5'-end triphosphate to release pyrophosphates. Stimulates exoribonuclease activity of Rat1, allowing it to degrade RNAs with stable secondary structure more effectively. The sequence is that of Decapping nuclease RAI1 (RAI1) from Debaryomyces hansenii (strain ATCC 36239 / CBS 767 / BCRC 21394 / JCM 1990 / NBRC 0083 / IGC 2968) (Yeast).